The chain runs to 832 residues: Protein wech (832 aa).

Residues 1 to 14 are compositionally biased toward polar residues; sequence MMELLSNNSVPQQM. Residues 1 to 42 form a disordered region; that stretch reads MMELLSNNSVPQQMASSNAPSANNVAHSSTANGSGGGSVSSN. Positions 15-32 are enriched in low complexity; the sequence is ASSNAPSANNVAHSSTAN. Position 107 is a phosphoserine (Ser107). 2 B box-type zinc fingers span residues 118-163 and 184-224; these read NSSI…IVSL and SGNF…YASI. Positions 123, 126, 145, 149, 189, 192, 211, and 216 each coordinate Zn(2+). A phosphoserine mark is found at Ser470, Ser475, and Ser506. NHL repeat units follow at residues 537-580, 584-627, 631-674, 680-722, and 727-770; these read SLSF…FNPD, KFKF…FTAS, LLKF…FDSE, QIVF…IDPD, and LSVK…FNQN.

Interacts with the head domain of rhea and the kinase domain of Ilk. Interacts with AGO1. Interacts with mei-P26. As to expression, expressed in ovarian germline stem cells (at protein level). Expressed ubiquitously in all epithelial cells during early stages of embryogenesis. Specifically expressed at epidermal muscle attachment site.

Vital for larval development. Plays a role in tumor formation. A crucial component for the physical link between integrins and the cytoskeleton in the epidermal muscle attachment sites. The polypeptide is Protein wech (wech) (Drosophila melanogaster (Fruit fly)).